A 28-amino-acid polypeptide reads, in one-letter code: uncharacterized protein (28 aa).

The helical transmembrane segment at Ser5–Leu27 threads the bilayer.

The protein localises to the membrane. This is an uncharacterized protein from Saccharomyces cerevisiae (strain ATCC 204508 / S288c) (Baker's yeast).